Consider the following 1503-residue polypeptide: DNA-directed RNA polymerase subunit beta' (1503 aa).

Zn(2+) is bound by residues Cys-60, Cys-62, Cys-75, and Cys-78. Residues Asp-626, Asp-628, and Asp-630 each contribute to the Mg(2+) site. Zn(2+)-binding residues include Cys-1002, Cys-1075, Cys-1082, and Cys-1085. Residues 1439–1503 form a disordered region; sequence EESQQAEEAP…EEEDNDLPAF (65 aa). Residues 1486–1503 are compositionally biased toward acidic residues; it reads GDNDQSDAEEEDNDLPAF.

Belongs to the RNA polymerase beta' chain family. In terms of assembly, the RNAP catalytic core consists of 2 alpha, 1 beta, 1 beta' and 1 omega subunit. When a sigma factor is associated with the core the holoenzyme is formed, which can initiate transcription. Requires Mg(2+) as cofactor. It depends on Zn(2+) as a cofactor.

It carries out the reaction RNA(n) + a ribonucleoside 5'-triphosphate = RNA(n+1) + diphosphate. Functionally, DNA-dependent RNA polymerase catalyzes the transcription of DNA into RNA using the four ribonucleoside triphosphates as substrates. This Chloroflexus aurantiacus (strain ATCC 29364 / DSM 637 / Y-400-fl) protein is DNA-directed RNA polymerase subunit beta'.